Consider the following 366-residue polypeptide: Acetylserotonin O-methyltransferase 3 (366 aa).

The S-adenosyl-L-homocysteine site is built by G209, D232, D253, and K267. The active-site Proton acceptor is the H271. Active-site residues include E302 and E332.

The protein belongs to the class I-like SAM-binding methyltransferase superfamily. Cation-independent O-methyltransferase family. In terms of assembly, homodimer. As to expression, expressed at low levels in roots, shoots, leaves, stems and flowers.

It localises to the cytoplasm. It catalyses the reaction N-acetylserotonin + S-adenosyl-L-methionine = melatonin + S-adenosyl-L-homocysteine + H(+). The protein operates within aromatic compound metabolism; melatonin biosynthesis; melatonin from serotonin: step 1/2. Functionally, methyltransferase which catalyzes the transfer of a methyl group onto N-acetylserotonin, producing melatonin (N-acetyl-5-methoxytryptamine). This is Acetylserotonin O-methyltransferase 3 from Oryza sativa subsp. japonica (Rice).